The primary structure comprises 106 residues: UPF0145 protein VV2_1464 (106 aa).

The protein belongs to the UPF0145 family.

This Vibrio vulnificus (strain CMCP6) protein is UPF0145 protein VV2_1464.